Reading from the N-terminus, the 291-residue chain is Protein US2 (291 aa).

Gly2 carries the post-translational modification N-acetylglycine; by host; partial. Residues 251 to 270 (PEVPDEQPTSPGRGPQETDP) are disordered.

Belongs to the herpesviridae HHV-1 US2 protein family. Interacts with host KRT18.

It localises to the host cytoplasm. The protein localises to the host nucleus. This chain is Protein US2, found in Homo sapiens (Human).